The sequence spans 103 residues: Small ribosomal subunit protein uS10 (103 aa).

This sequence belongs to the universal ribosomal protein uS10 family. Part of the 30S ribosomal subunit.

Its function is as follows. Involved in the binding of tRNA to the ribosomes. This is Small ribosomal subunit protein uS10 from Sulfurovum sp. (strain NBC37-1).